Consider the following 301-residue polypeptide: MSQLPLSGTFTALVTPFTPDGEAVDFDALDALVEAQIAGGVSGLVPCGTTGESPTLSEAETTAVIRRVVEAARGRVPVIAGTGSFSTKKTIEASRAALAAGAAGVMIVMPYYSKPSQDGLREHTLAVARAVPAPIVLYNIPGRTVVDLSAETTERICAAAPNVVAIKDASGNVFRCQELVRRLGDRLTILSGDDALTLAMMALGAQGVISVTSNVLPRETSAVTRRFLAGDLAGARAAHLALLELHGLLFVEPNPAPAKAALAALGRMSAAVRLPLVPAGEATRQQIAEAMRRLEARREAS.

T50 provides a ligand contact to pyruvate. Catalysis depends on Y138, which acts as the Proton donor/acceptor. The active-site Schiff-base intermediate with substrate is K167. I209 provides a ligand contact to pyruvate.

This sequence belongs to the DapA family. In terms of assembly, homotetramer; dimer of dimers.

Its subcellular location is the cytoplasm. The catalysed reaction is L-aspartate 4-semialdehyde + pyruvate = (2S,4S)-4-hydroxy-2,3,4,5-tetrahydrodipicolinate + H2O + H(+). It participates in amino-acid biosynthesis; L-lysine biosynthesis via DAP pathway; (S)-tetrahydrodipicolinate from L-aspartate: step 3/4. Catalyzes the condensation of (S)-aspartate-beta-semialdehyde [(S)-ASA] and pyruvate to 4-hydroxy-tetrahydrodipicolinate (HTPA). The polypeptide is 4-hydroxy-tetrahydrodipicolinate synthase (Sorangium cellulosum (strain So ce56) (Polyangium cellulosum (strain So ce56))).